Here is a 119-residue protein sequence, read N- to C-terminus: Putative F-box protein At2g39415 (119 aa).

The region spanning 37–92 is the F-box domain; it reads IDSISSLPDVILQQILSSLPTNLAIRTSVLSTRWRHVWSDTPYIYFDGPGTLYRGL.

In Arabidopsis thaliana (Mouse-ear cress), this protein is Putative F-box protein At2g39415.